A 462-amino-acid polypeptide reads, in one-letter code: uncharacterized protein (462 aa).

In terms of domain architecture, TRAM spans 12–70 (MLKKNDIIQVAISDLSHEGAGVAKHDGFVFFVDNALPEEVIDMRVLKVNKNSGFGKVEA). Positions 294, 323, 344, and 392 each coordinate S-adenosyl-L-methionine. C419 serves as the catalytic Nucleophile.

It belongs to the class I-like SAM-binding methyltransferase superfamily. RNA M5U methyltransferase family.

This is an uncharacterized protein from Streptococcus pyogenes serotype M1.